Reading from the N-terminus, the 375-residue chain is Queuine tRNA-ribosyltransferase (375 aa).

The Proton acceptor role is filled by Asp93. Substrate is bound by residues 93 to 97 (DSGGY), Asp147, Gln194, and Gly221. The tract at residues 252–258 (GVGKPDD) is RNA binding. Catalysis depends on Asp271, which acts as the Nucleophile. Residues 276–280 (TRSGR) are RNA binding; important for wobble base 34 recognition. Zn(2+) contacts are provided by Cys309, Cys311, Cys314, and His340.

Belongs to the queuine tRNA-ribosyltransferase family. As to quaternary structure, homodimer. Within each dimer, one monomer is responsible for RNA recognition and catalysis, while the other monomer binds to the replacement base PreQ1. It depends on Zn(2+) as a cofactor.

The enzyme catalyses 7-aminomethyl-7-carbaguanine + guanosine(34) in tRNA = 7-aminomethyl-7-carbaguanosine(34) in tRNA + guanine. It participates in tRNA modification; tRNA-queuosine biosynthesis. Catalyzes the base-exchange of a guanine (G) residue with the queuine precursor 7-aminomethyl-7-deazaguanine (PreQ1) at position 34 (anticodon wobble position) in tRNAs with GU(N) anticodons (tRNA-Asp, -Asn, -His and -Tyr). Catalysis occurs through a double-displacement mechanism. The nucleophile active site attacks the C1' of nucleotide 34 to detach the guanine base from the RNA, forming a covalent enzyme-RNA intermediate. The proton acceptor active site deprotonates the incoming PreQ1, allowing a nucleophilic attack on the C1' of the ribose to form the product. After dissociation, two additional enzymatic reactions on the tRNA convert PreQ1 to queuine (Q), resulting in the hypermodified nucleoside queuosine (7-(((4,5-cis-dihydroxy-2-cyclopenten-1-yl)amino)methyl)-7-deazaguanosine). In Sphingopyxis alaskensis (strain DSM 13593 / LMG 18877 / RB2256) (Sphingomonas alaskensis), this protein is Queuine tRNA-ribosyltransferase.